Consider the following 256-residue polypeptide: Indole-3-glycerol phosphate synthase (256 aa).

This sequence belongs to the TrpC family.

It carries out the reaction 1-(2-carboxyphenylamino)-1-deoxy-D-ribulose 5-phosphate + H(+) = (1S,2R)-1-C-(indol-3-yl)glycerol 3-phosphate + CO2 + H2O. It participates in amino-acid biosynthesis; L-tryptophan biosynthesis; L-tryptophan from chorismate: step 4/5. The polypeptide is Indole-3-glycerol phosphate synthase (Caldanaerobacter subterraneus subsp. tengcongensis (strain DSM 15242 / JCM 11007 / NBRC 100824 / MB4) (Thermoanaerobacter tengcongensis)).